The chain runs to 360 residues: Aminomethyltransferase (360 aa).

The protein belongs to the GcvT family. As to quaternary structure, the glycine cleavage system is composed of four proteins: P, T, L and H.

The enzyme catalyses N(6)-[(R)-S(8)-aminomethyldihydrolipoyl]-L-lysyl-[protein] + (6S)-5,6,7,8-tetrahydrofolate = N(6)-[(R)-dihydrolipoyl]-L-lysyl-[protein] + (6R)-5,10-methylene-5,6,7,8-tetrahydrofolate + NH4(+). In terms of biological role, the glycine cleavage system catalyzes the degradation of glycine. This chain is Aminomethyltransferase, found in Pseudomonas aeruginosa (strain ATCC 15692 / DSM 22644 / CIP 104116 / JCM 14847 / LMG 12228 / 1C / PRS 101 / PAO1).